The following is a 376-amino-acid chain: Salivary hyaluronidase (376 aa).

Residues 1 to 16 (MNWIFHLFCAVYGIFC) form the signal peptide. Disulfide bonds link Cys-32/Cys-328 and Cys-203/Cys-217. 4 N-linked (GlcNAc...) asparagine glycosylation sites follow: Asn-36, Asn-55, Asn-77, and Asn-88. Residue Glu-118 is the Proton donor of the active site. N-linked (GlcNAc...) asparagine glycans are attached at residues Asn-143, Asn-153, Asn-181, Asn-214, Asn-226, Asn-248, Asn-287, Asn-321, Asn-336, Asn-356, and Asn-371.

Belongs to the glycosyl hydrolase 56 family. In terms of processing, glycosylated; glycosylation is critical for enzymatic activity. As to expression, female salivary gland (at protein level).

It is found in the secreted. It carries out the reaction Random hydrolysis of (1-&gt;4)-linkages between N-acetyl-beta-D-glucosamine and D-glucuronate residues in hyaluronate.. In terms of biological role, hydrolyzes high molecular weight hyaluronic acid to produce small oligosaccharides. Up-regulates expression of CSF2, CSF3, LIF, CXCL1, CXCL2 and CXCL8 in cultured human dermal microvascular endothelial cells. Promotes host neutrophil recruitment at the injection site. (Microbial infection) Probably promotes Leishmania major infection in the host. This is Salivary hyaluronidase from Lutzomyia longipalpis (Sand fly).